An 862-amino-acid polypeptide reads, in one-letter code: Putative PIP5K1A and PSMD4-like protein (862 aa).

The region spanning 28-396 is the PIPK domain; that stretch reads TSSALKGAIQ…WFQRFMCNTV (369 aa). 2 disordered regions span residues 404 to 424 and 453 to 481; these read PSPS…GSSG and HLGC…PSFS. The segment covering 412-424 has biased composition (low complexity); that stretch reads SGSSFSQRAGSSG. Residues 490 to 673 form the VWFA domain; the sequence is MLTTSVDNSE…LADALISFPI (184 aa). The UIM 1 domain maps to 696–715; sequence SADPELALVLRVFMEEQRQR. Positions 716–740 are disordered; that stretch reads QEEEARQAAAASAAEAGIATTGTED. Over residues 722–731 the composition is skewed to low complexity; sequence QAAAASAAEA. Residues 766–783 form the UIM 2 domain; that stretch reads MTEEEKIVCAMQMSLQGA. The tract at residues 826–862 is disordered; it reads NLPGVDPNNEAIRNAVGSLASQATKDSKKDKKEEDKK. Over residues 850-862 the composition is skewed to basic and acidic residues; that stretch reads KDSKKDKKEEDKK.

Testis-specific.

It is found in the cytoplasm. Has negligible PIP5 kinase activity. Binds to ubiquitinated proteins. The chain is Putative PIP5K1A and PSMD4-like protein (PIPSL) from Homo sapiens (Human).